We begin with the raw amino-acid sequence, 369 residues long: Outer membrane porin F (369 aa).

An N-terminal signal peptide occupies residues 1–21; it reads MKRNILAVVIPALLVAGTANA. The beta stranded transmembrane segment at 22-27 threads the bilayer; the sequence is AEIFNK. Position 28 (Asp28) is a topological domain, periplasmic. Residues 29-44 traverse the membrane as a beta stranded segment; the sequence is GNKLDLYGKVDVRHQF. The Extracellular portion of the chain corresponds to 45 to 55; that stretch reads ADKRSSEDGDD. The chain crosses the membrane as a beta stranded span at residues 56 to 68; it reads SYARIGIKGETQI. Topologically, residues 69 to 70 are periplasmic; sequence SD. The chain crosses the membrane as a beta stranded span at residues 71–83; it reads QLTGFGRWEYNVK. At 84–97 the chain is on the extracellular side; that stretch reads AKGTEAAVAESSTR. The beta stranded transmembrane segment at 98 to 106 threads the bilayer; that stretch reads LAFAGLKFA. Over 107–108 the chain is Periplasmic; that stretch reads NY. A beta stranded transmembrane segment spans residues 109–115; sequence GSLDYGR. The Extracellular portion of the chain corresponds to 116 to 150; it reads NYGVNYDVNAWTDVLPIFGGDAMAQTDNFMTGRST. A beta stranded transmembrane segment spans residues 151 to 157; it reads GLLTYRN. Residues 158 to 165 lie on the Periplasmic side of the membrane; it reads TDFFGLVD. Residues 166 to 177 traverse the membrane as a beta stranded segment; that stretch reads GLNFALQYQGQN. The Extracellular portion of the chain corresponds to 178-193; that stretch reads SDRTKNKGRDTERSNG. The beta stranded transmembrane segment at 194–204 threads the bilayer; sequence DGYGLSSTYDV. Over 205–206 the chain is Periplasmic; sequence GY. A beta stranded transmembrane segment spans residues 207 to 219; sequence GITVGGSYANSAR. Residues 220 to 234 lie on the Extracellular side of the membrane; that stretch reads TADQKEKVSDAYGKR. The chain crosses the membrane as a beta stranded span at residues 235-246; sequence AEAWNIGAKYDA. Residue Asn247 is a topological domain, periplasmic. The chain crosses the membrane as a beta stranded span at residues 248-259; that stretch reads NVYLAAMYGETR. At 260–278 the chain is on the extracellular side; that stretch reads NMTRYTRTIADTDATLIAN. Residues 279–291 traverse the membrane as a beta stranded segment; the sequence is KTQNIELTAQYLF. Residues 292 to 294 lie on the Periplasmic side of the membrane; it reads SDL. A beta stranded membrane pass occupies residues 295–308; that stretch reads GLKPSLAYVQSKGK. Residues 309 to 320 lie on the Extracellular side of the membrane; the sequence is DLTEGKGFNGDL. A beta stranded transmembrane segment spans residues 321-332; the sequence is VKYVSVGTYYYF. The Periplasmic portion of the chain corresponds to 333–334; that stretch reads NK. Residues 335 to 344 form a beta stranded membrane-spanning segment; the sequence is NLSTYVDYKI. The Extracellular segment spans residues 345–359; sequence NLLKKDNELGVNARN. A beta stranded membrane pass occupies residues 360–369; the sequence is VFGVGLTYQF.

It belongs to the Gram-negative porin family. As to quaternary structure, homotrimer.

It is found in the cell outer membrane. In terms of biological role, forms pores that allow passive diffusion of small molecules across the outer membrane. The protein is Outer membrane porin F (ompF) of Xenorhabdus nematophila (strain ATCC 19061 / DSM 3370 / CCUG 14189 / LMG 1036 / NCIMB 9965 / AN6).